The sequence spans 143 residues: Small ribosomal subunit protein uS12 (143 aa).

A compositionally biased stretch (basic residues) spans 1–19 (MGKPKGIRAARKLKTHRQA). The disordered stretch occupies residues 1–21 (MGKPKGIRAARKLKTHRQAQR). Pro-62 carries the post-translational modification Hydroxyproline.

This sequence belongs to the universal ribosomal protein uS12 family. As to quaternary structure, component of the 40S small ribosomal subunit.

It localises to the cytoplasm. The protein localises to the cytosol. The protein resides in the rough endoplasmic reticulum. The sequence is that of Small ribosomal subunit protein uS12 (rps-23) from Brugia malayi (Filarial nematode worm).